The chain runs to 200 residues: Protein GrpE (200 aa).

It belongs to the GrpE family. As to quaternary structure, homodimer.

It localises to the cytoplasm. Functionally, participates actively in the response to hyperosmotic and heat shock by preventing the aggregation of stress-denatured proteins, in association with DnaK and GrpE. It is the nucleotide exchange factor for DnaK and may function as a thermosensor. Unfolded proteins bind initially to DnaJ; upon interaction with the DnaJ-bound protein, DnaK hydrolyzes its bound ATP, resulting in the formation of a stable complex. GrpE releases ADP from DnaK; ATP binding to DnaK triggers the release of the substrate protein, thus completing the reaction cycle. Several rounds of ATP-dependent interactions between DnaJ, DnaK and GrpE are required for fully efficient folding. The sequence is that of Protein GrpE from Mycoplasma mycoides subsp. mycoides SC (strain CCUG 32753 / NCTC 10114 / PG1).